Reading from the N-terminus, the 126-residue chain is Non-specific lipid-transfer protein 13 (126 aa).

The N-terminal stretch at 1-20 (MDTHTTKLVAISLLLLLVIS) is a signal peptide. 4 disulfides stabilise this stretch: Cys36-Cys85, Cys46-Cys61, Cys62-Cys109, and Cys83-Cys123.

The protein belongs to the plant LTP family.

Its function is as follows. Plant non-specific lipid-transfer proteins transfer phospholipids as well as galactolipids across membranes. May play a role in wax or cutin deposition in the cell walls of expanding epidermal cells and certain secretory tissues. This chain is Non-specific lipid-transfer protein 13 (LTP13), found in Arabidopsis thaliana (Mouse-ear cress).